Reading from the N-terminus, the 190-residue chain is RRP15-like protein (190 aa).

Positions 1-11 (MSTKNRDRLVV) are enriched in basic and acidic residues. Disordered stretches follow at residues 1–69 (MSTK…TRKE) and 119–190 (QKTM…SDED). Basic residues predominate over residues 55–66 (QRKKKKVIKKLT). Positions 59-84 (KKVIKKLTRKEQSLKHSVKEYRIKLA) form a coiled coil. The segment covering 119-153 (QKTMSDAVKEKMTARDRKEARERFDGKNFDSDKFA) has biased composition (basic and acidic residues). Residues 167 to 190 (GEEEDEQMNIGDDEIDAGNYSDED) are compositionally biased toward acidic residues.

This sequence belongs to the RRP15 family.

The polypeptide is RRP15-like protein (Caenorhabditis briggsae).